A 161-amino-acid polypeptide reads, in one-letter code: Stress response protein YvgO (161 aa).

The first 26 residues, 1-26 (MKRIRIPMTLALGAALTIAPLSFASA), serve as a signal peptide directing secretion.

The protein is Stress response protein YvgO (yvgO) of Bacillus subtilis (strain 168).